The chain runs to 186 residues: Protein Syd (186 aa).

The protein belongs to the Syd family.

It localises to the cell inner membrane. Interacts with the SecY protein in vivo. May bind preferentially to an uncomplexed state of SecY, thus functioning either as a chelating agent for excess SecY in the cell or as a regulatory factor that negatively controls the translocase function. This is Protein Syd from Erwinia tasmaniensis (strain DSM 17950 / CFBP 7177 / CIP 109463 / NCPPB 4357 / Et1/99).